Here is a 318-residue protein sequence, read N- to C-terminus: Ribose-phosphate pyrophosphokinase (318 aa).

ATP-binding positions include 40-42 (DGE) and 99-100 (RQ). Residues histidine 134 and aspartate 173 each contribute to the Mg(2+) site. Lysine 196 is an active-site residue. D-ribose 5-phosphate contacts are provided by residues arginine 198, aspartate 222, and 226–230 (DTAGT).

It belongs to the ribose-phosphate pyrophosphokinase family. Class I subfamily. Homohexamer. Mg(2+) is required as a cofactor.

Its subcellular location is the cytoplasm. The catalysed reaction is D-ribose 5-phosphate + ATP = 5-phospho-alpha-D-ribose 1-diphosphate + AMP + H(+). It functions in the pathway metabolic intermediate biosynthesis; 5-phospho-alpha-D-ribose 1-diphosphate biosynthesis; 5-phospho-alpha-D-ribose 1-diphosphate from D-ribose 5-phosphate (route I): step 1/1. In terms of biological role, involved in the biosynthesis of the central metabolite phospho-alpha-D-ribosyl-1-pyrophosphate (PRPP) via the transfer of pyrophosphoryl group from ATP to 1-hydroxyl of ribose-5-phosphate (Rib-5-P). This chain is Ribose-phosphate pyrophosphokinase, found in Burkholderia pseudomallei (strain K96243).